The following is a 188-amino-acid chain: EP300-interacting inhibitor of differentiation 1 (188 aa).

Residues 1 to 122 (MSEMAELSEL…PEEEQLSGAG (122 aa)) form a disordered region. Acidic residues-rich tracts occupy residues 53-64 (LEEEGPMEEEEA) and 94-117 (FESE…EEEQ). Residues 55–121 (EEGPMEEEEA…YPEEEQLSGA (67 aa)) are interaction with NR0B2. An LXCXE motif motif is present at residues 179 to 183 (LGCDE).

As to quaternary structure, interacts via its LXCXE motif with the entire pocket region of RB1. Interacts with EP300, NR0B2 and TRIM27.

The protein localises to the nucleus. Its subcellular location is the cytoplasm. Interacts with RB1 and EP300 and acts as a repressor of MYOD1 transactivation. Inhibits EP300 and CBP histone acetyltransferase activity. May be involved in coupling cell cycle exit to the transcriptional activation of genes required for cellular differentiation. May act as a candidate coinhibitory factor for NR0B2 that can be directly linked to transcription inhibitory mechanisms. This Pongo abelii (Sumatran orangutan) protein is EP300-interacting inhibitor of differentiation 1.